Here is a 342-residue protein sequence, read N- to C-terminus: MATH domain and coiled-coil domain-containing protein At3g44800 (342 aa).

An MATH domain is found at 3–129; that stretch reads YEKFTWVIKN…NNEVKIVAEV (127 aa). Residues 253–327 are a coiled coil; that stretch reads KVDWLERKLE…ALLEKEKGKV (75 aa).

The polypeptide is MATH domain and coiled-coil domain-containing protein At3g44800 (Arabidopsis thaliana (Mouse-ear cress)).